The following is a 74-amino-acid chain: ATP synthase subunit c (74 aa).

2 consecutive transmembrane segments (helical) span residues 8–28 and 52–72; these read FIGVGLMAIGMYGAALGVSNI and IGAGLAEAIGLFSFVIAMLLI.

The protein belongs to the ATPase C chain family. As to quaternary structure, F-type ATPases have 2 components, F(1) - the catalytic core - and F(0) - the membrane proton channel. F(1) has five subunits: alpha(3), beta(3), gamma(1), delta(1), epsilon(1). F(0) has three main subunits: a(1), b(2) and c(10-14). The alpha and beta chains form an alternating ring which encloses part of the gamma chain. F(1) is attached to F(0) by a central stalk formed by the gamma and epsilon chains, while a peripheral stalk is formed by the delta and b chains.

The protein localises to the cell inner membrane. In terms of biological role, f(1)F(0) ATP synthase produces ATP from ADP in the presence of a proton or sodium gradient. F-type ATPases consist of two structural domains, F(1) containing the extramembraneous catalytic core and F(0) containing the membrane proton channel, linked together by a central stalk and a peripheral stalk. During catalysis, ATP synthesis in the catalytic domain of F(1) is coupled via a rotary mechanism of the central stalk subunits to proton translocation. Key component of the F(0) channel; it plays a direct role in translocation across the membrane. A homomeric c-ring of between 10-14 subunits forms the central stalk rotor element with the F(1) delta and epsilon subunits. The sequence is that of ATP synthase subunit c from Rickettsia canadensis (strain McKiel).